We begin with the raw amino-acid sequence, 122 residues long: MIQMQTYLTIADNTGGKVAQCIKVLGGSKRRYAKIGDIITIVVKQAIPNSSVKKGDVHKAVIVRTSKEVRRKNGTYVRFDDNACVILDANLSPRGKRVFGPVARELRDANFMKVVSLASEVI.

The protein belongs to the universal ribosomal protein uL14 family. As to quaternary structure, part of the 50S ribosomal subunit. Forms a cluster with proteins L3 and L19. In the 70S ribosome, L14 and L19 interact and together make contacts with the 16S rRNA in bridges B5 and B8.

Its function is as follows. Binds to 23S rRNA. Forms part of two intersubunit bridges in the 70S ribosome. This is Large ribosomal subunit protein uL14 from Borreliella burgdorferi (strain ZS7) (Borrelia burgdorferi).